Reading from the N-terminus, the 414-residue chain is Esterase FrsA (414 aa).

The protein belongs to the FrsA family.

The catalysed reaction is a carboxylic ester + H2O = an alcohol + a carboxylate + H(+). In terms of biological role, catalyzes the hydrolysis of esters. This Escherichia coli O6:K15:H31 (strain 536 / UPEC) protein is Esterase FrsA.